The primary structure comprises 154 residues: MSANFTDKNGRQSKGVLLLRTLAMPSDTNANGDIFGGWIMSQMDMGGAILAKEIAHGRVVTVAVESMNFIKPISVGDVVCCYGQCLKVGRSSIKIKVEVWVKKVASEPIGERYCVTDAVFTFVAVDNNGRSRTIPRENNQELEKALALISEQPL.

In terms of domain architecture, HotDog ACOT-type spans 13–128; sequence SKGVLLLRTL…VFTFVAVDNN (116 aa).

This sequence belongs to the acyl coenzyme A hydrolase family.

This is an uncharacterized protein from Haemophilus influenzae (strain ATCC 51907 / DSM 11121 / KW20 / Rd).